Consider the following 322-residue polypeptide: METNLSEEKQKPSKSQAQQRRQMENYEFSQLANELPLARAISGQHIDKTTMVRLATAYIKLHNIFGQSQRAYSSADYYYGSDSLWTNNHLDLLDGFFVILDRRGDVLYISETISIYLGLSQVEMTGNAMVDYIHEQDINCFNSALNYCDLNWPQMCNVRVKSSLTKRANKDAVRASPGYKVLRLEITMGPNTNTRMIACYPMPTPVLSTVTIPSNSFVIITSIDLHITFADEKAHQLLNNPFYPDSNIKGMSLYSLIDISDSEVISKMHFDIFNLGAYKTPYYRMILNQTSETFYVESNIFRHTSISSKQFNDSITFVSSIL.

Residues 1-11 show a composition bias toward basic and acidic residues; the sequence is METNLSEEKQK. The disordered stretch occupies residues 1-23; it reads METNLSEEKQKPSKSQAQQRRQM. A bHLH domain is found at 8 to 62; it reads EKQKPSKSQAQQRRQMENYEFSQLANELPLARAISGQHIDKTTMVRLATAYIKLH. PAS domains lie at 82 to 152 and 203 to 276; these read DSLW…DLNW and PTPV…FNLG.

Efficient DNA binding requires dimerization with another bHLH protein. Expressed in a small subset of neurons, probably AVJL and AVJR. Expressed in the AVH neurons.

It localises to the nucleus. In terms of biological role, transcription factor. Involved in specifying AVH neuron identity, acting in concert with unc-42. Involved in serotonin-mediated feeding behavior, probably acting by modulating expression of genes involved in glutamate signaling. In Caenorhabditis elegans, this protein is Helix-loop-helix 34 (hlh-34).